A 377-amino-acid chain; its full sequence is Actin-related protein T2 (377 aa).

Belongs to the actin family.

Its subcellular location is the cytoplasm. It is found in the cytoskeleton. The polypeptide is Actin-related protein T2 (ACTRT2) (Homo sapiens (Human)).